Consider the following 555-residue polypeptide: Sulfite reductase [ferredoxin] 2 (555 aa).

Positions 1-31 (MTTARPAKARNEGQWALGNREPLNPNEEMKQ) are disordered. Positions 69 to 161 (YTQREQGYDG…AVGLRTTEAC (93 aa)) form a cross-link, 3'-(S-cysteinyl)-tyrosine (Tyr-Cys). The [4Fe-4S] cluster site is built by Cys-417, Cys-423, Cys-463, and Cys-467. Cys-467 lines the siroheme pocket.

It belongs to the nitrite and sulfite reductase 4Fe-4S domain family. In terms of assembly, monomer. The cofactor is siroheme. Requires [4Fe-4S] cluster as cofactor.

The enzyme catalyses hydrogen sulfide + 6 oxidized [2Fe-2S]-[ferredoxin] + 3 H2O = sulfite + 6 reduced [2Fe-2S]-[ferredoxin] + 7 H(+). In terms of biological role, catalyzes the reduction of sulfite to sulfide, a step in the biosynthesis of sulfur-containing amino acids and cofactors. The protein is Sulfite reductase [ferredoxin] 2 (sir2) of Mycolicibacterium paratuberculosis (strain ATCC BAA-968 / K-10) (Mycobacterium paratuberculosis).